Here is a 416-residue protein sequence, read N- to C-terminus: Diaminopimelate decarboxylase (416 aa).

An N6-(pyridoxal phosphate)lysine modification is found at Lys60. Pyridoxal 5'-phosphate contacts are provided by residues Gly240 and 274-277 (EPGR). Substrate-binding residues include Arg277, Arg313, and Tyr317. Catalysis depends on Cys343, which acts as the Proton donor. Substrate is bound by residues Glu344 and Tyr371. Tyr371 provides a ligand contact to pyridoxal 5'-phosphate.

This sequence belongs to the Orn/Lys/Arg decarboxylase class-II family. LysA subfamily. As to quaternary structure, homodimer. Requires pyridoxal 5'-phosphate as cofactor.

The catalysed reaction is meso-2,6-diaminopimelate + H(+) = L-lysine + CO2. The protein operates within amino-acid biosynthesis; L-lysine biosynthesis via DAP pathway; L-lysine from DL-2,6-diaminopimelate: step 1/1. Functionally, specifically catalyzes the decarboxylation of meso-diaminopimelate (meso-DAP) to L-lysine. In Pseudomonas fluorescens, this protein is Diaminopimelate decarboxylase.